A 138-amino-acid chain; its full sequence is MLIPRKVKHRKQHHPRQRGIASGGTTVSFGDYGIQALEHAYITNRQIESARIAINRHIKRGGKVWINIFPDRPLTKKPAETRMGSGKGSPEWWVANVKPGRVLFELSYPDEKTARDALTRAIHKLPIKARIVTREENF.

The segment covering 1–17 has biased composition (basic residues); it reads MLIPRKVKHRKQHHPRQ. Residues 1–23 are disordered; that stretch reads MLIPRKVKHRKQHHPRQRGIASG.

Belongs to the universal ribosomal protein uL16 family. In terms of assembly, part of the 50S ribosomal subunit.

Functionally, binds 23S rRNA and is also seen to make contacts with the A and possibly P site tRNAs. The polypeptide is Large ribosomal subunit protein uL16 (Mycobacterium sp. (strain JLS)).